Here is a 306-residue protein sequence, read N- to C-terminus: Methionyl-tRNA formyltransferase (306 aa).

110–113 lines the (6S)-5,6,7,8-tetrahydrofolate pocket; it reads SLLP.

It belongs to the Fmt family.

The enzyme catalyses L-methionyl-tRNA(fMet) + (6R)-10-formyltetrahydrofolate = N-formyl-L-methionyl-tRNA(fMet) + (6S)-5,6,7,8-tetrahydrofolate + H(+). Attaches a formyl group to the free amino group of methionyl-tRNA(fMet). The formyl group appears to play a dual role in the initiator identity of N-formylmethionyl-tRNA by promoting its recognition by IF2 and preventing the misappropriation of this tRNA by the elongation apparatus. This Brucella abortus (strain S19) protein is Methionyl-tRNA formyltransferase.